The following is a 95-amino-acid chain: Small ribosomal subunit protein bS20 (95 aa).

The protein belongs to the bacterial ribosomal protein bS20 family.

In terms of biological role, binds directly to 16S ribosomal RNA. This is Small ribosomal subunit protein bS20 from Ehrlichia ruminantium (strain Gardel).